The chain runs to 784 residues: LPS-assembly protein LptD (784 aa).

The first 24 residues, 1-24 (MKKRIPTLLATMIATALYSQQGLA), serve as a signal peptide directing secretion. 2 disulfide bridges follow: Cys-31–Cys-724 and Cys-173–Cys-725.

This sequence belongs to the LptD family. As to quaternary structure, component of the lipopolysaccharide transport and assembly complex. Interacts with LptE and LptA. Contains two intramolecular disulfide bonds.

The protein localises to the cell outer membrane. Together with LptE, is involved in the assembly of lipopolysaccharide (LPS) at the surface of the outer membrane. The protein is LPS-assembly protein LptD of Shigella dysenteriae serotype 1 (strain Sd197).